The chain runs to 340 residues: Outer membrane protein B (340 aa).

The N-terminal stretch at 1-26 is a signal peptide; it reads MSSKLVNSLRLTFLSFLGIVSTSLDA.

The protein belongs to the chlamydial OMP family.

The protein resides in the cell outer membrane. This is Outer membrane protein B (ompB) from Chlamydia muridarum (strain MoPn / Nigg).